Consider the following 462-residue polypeptide: 3beta-hydroxysteroid dehydrogenase/Delta(5)-Delta(4) isomerase 1 (462 aa).

Residues 51–56, Tyr220, and Lys224 each bind NAD(+); that span reads GGAGHL. Lys224 (proton donor) is an active-site residue. Transmembrane regions (helical) follow at residues 321–341 and 428–448; these read VGTFSFWTPLNIALGFSSSMI and VAVLVLGTILIFVAVFSFTFW.

This sequence belongs to the 3-beta-HSD family. In terms of tissue distribution, expressed exclusively in the neuron-like XXX(L/R) cells through all four larval stages and becomes fainter in adults.

It localises to the membrane. It catalyses the reaction a 3beta-hydroxy-Delta(5)-steroid + NAD(+) = a 3-oxo-Delta(5)-steroid + NADH + H(+). The catalysed reaction is cholesterol + NAD(+) = cholest-5-en-3-one + NADH + H(+). It carries out the reaction a 3-oxo-Delta(5)-steroid = a 3-oxo-Delta(4)-steroid. The enzyme catalyses cholest-5-en-3-one = cholest-4-en-3-one. It participates in steroid hormone biosynthesis; dafachronic acid biosynthesis. Its function is as follows. Hydroxysteroid dehydrogenase involved in the biosynthesis of dafrachonic acids. Catalyzes the dehydrogenation of cholesterol or its derivatives and the isomerization of the double carbon bond on the sterol ring. Modifies sterols into a Delta(4)-3-keto-sterols such as cholest-4-en-3-one, precursor of Delta(4)-dafachronic acid. Contributes to the production of Delta(7)-dafachronic acid in the XXX cells. Dafachronic acids act as ligands and bind directly to the nuclear hormone receptor (NHR) daf-12 suppressing dauer formation and inducing reproductive growth. Acts in parallel to AKT-1 to promote reproductive development via DAF-16/FoxO and DAF-12. The chain is 3beta-hydroxysteroid dehydrogenase/Delta(5)-Delta(4) isomerase 1 from Caenorhabditis elegans.